Here is a 255-residue protein sequence, read N- to C-terminus: Shieldin complex subunit 3 (255 aa).

Residues 33 to 88 form a sufficient for interaction with MAD2L2 region; the sequence is QDFPTHPLPRFIPWFPYDESKLPLKPERLPPVISEEAAESVKQYLAISEPGVKSQS. The segment at 116–135 is disordered; sequence QTNAAHLDKNSGKEKQHKQR.

In terms of assembly, component of the shieldin complex, consisting of SHLD1, SHLD2, SHLD3 and MAD2L2/REV7. Within the complex, SHLD2 forms a scaffold which interacts with a SHLD3-MAD2L2 subcomplex via its N-terminus, and with SHLD1 via its C-terminus. Interacts with ASTE1.

Its subcellular location is the chromosome. Component of the shieldin complex, which plays an important role in repair of DNA double-stranded breaks (DSBs). During G1 and S phase of the cell cycle, the complex functions downstream of TP53BP1 to promote non-homologous end joining (NHEJ) and suppress DNA end resection. Mediates various NHEJ-dependent processes including immunoglobulin class-switch recombination, and fusion of unprotected telomeres. This chain is Shieldin complex subunit 3, found in Mus musculus (Mouse).